The sequence spans 353 residues: tRNA N6-adenosine threonylcarbamoyltransferase (353 aa).

Histidine 109 and histidine 113 together coordinate Fe cation. Residues 136–140, aspartate 169, glycine 182, aspartate 186, and asparagine 284 each bind substrate; that span reads TVSGG. Residue aspartate 312 participates in Fe cation binding.

It belongs to the KAE1 / TsaD family. Fe(2+) serves as cofactor.

It is found in the cytoplasm. It catalyses the reaction L-threonylcarbamoyladenylate + adenosine(37) in tRNA = N(6)-L-threonylcarbamoyladenosine(37) in tRNA + AMP + H(+). In terms of biological role, required for the formation of a threonylcarbamoyl group on adenosine at position 37 (t(6)A37) in tRNAs that read codons beginning with adenine. Is involved in the transfer of the threonylcarbamoyl moiety of threonylcarbamoyl-AMP (TC-AMP) to the N6 group of A37, together with TsaE and TsaB. TsaD likely plays a direct catalytic role in this reaction. This Chlorobium limicola (strain DSM 245 / NBRC 103803 / 6330) protein is tRNA N6-adenosine threonylcarbamoyltransferase.